A 482-amino-acid polypeptide reads, in one-letter code: DnaJ protein P58IPK homolog (482 aa).

The first 42 residues, 1–42 (MDLFRVWSGMDFLAWRGMAYTLLLLNFVFACQLLLLQPLVSA), serve as a signal peptide directing secretion. TPR repeat units follow at residues 50 to 83 (AAEL…DPAL), 85 to 117 (EAYF…KSGD), 130 to 164 (AKSA…SPAC), 166 to 198 (KAKL…DENN), 199 to 232 (LEAL…DPEH), 245 to 278 (LLKK…DPEH), 283 to 316 (VHLY…DAEL), and 318 to 350 (EALH…SQDM). The 67-residue stretch at 370–436 (DWYKILGISR…DKRARFDRGE (67 aa)) folds into the J domain.

Interacts with the helicase domain of the tobamovirus (TMV) and the tobacco etch virus (TEV) replicases. In terms of tissue distribution, expressed in flower buds and flowers.

It localises to the endoplasmic reticulum lumen. Functionally, plays an important positive role in viral symptom development and is required for viral multiplication and pathogenesis. The sequence is that of DnaJ protein P58IPK homolog (P58IPK) from Arabidopsis thaliana (Mouse-ear cress).